The following is a 196-amino-acid chain: Lipoprotein signal peptidase (196 aa).

The tract at residues 1-24 is disordered; sequence MAEAERIIGMPENPDVDGTDEGGS. Helical transmembrane passes span 40-60, 92-112, and 118-138; these read ILAL…SKML, IGEA…VVIF, and LYSL…LGNL. Catalysis depends on residues D155 and D169. A helical transmembrane segment spans residues 164-184; that stretch reads VFNLADSAIVCGGILIVILSF.

Belongs to the peptidase A8 family.

Its subcellular location is the cell membrane. It carries out the reaction Release of signal peptides from bacterial membrane prolipoproteins. Hydrolyzes -Xaa-Yaa-Zaa-|-(S,diacylglyceryl)Cys-, in which Xaa is hydrophobic (preferably Leu), and Yaa (Ala or Ser) and Zaa (Gly or Ala) have small, neutral side chains.. It participates in protein modification; lipoprotein biosynthesis (signal peptide cleavage). This protein specifically catalyzes the removal of signal peptides from prolipoproteins. The polypeptide is Lipoprotein signal peptidase (Streptomyces griseus subsp. griseus (strain JCM 4626 / CBS 651.72 / NBRC 13350 / KCC S-0626 / ISP 5235)).